The primary structure comprises 2269 residues: Anaphase-promoting complex subunit 1 (2269 aa).

Disordered stretches follow at residues 305-334 (PSSN…QTIN), 379-433 (SSPP…QENS), 609-644 (NNNN…RKPL), 804-845 (KVYP…NNNN), and 1136-1197 (STAS…NSTS). Composition is skewed to low complexity over residues 306-334 (SSNA…QTIN), 379-430 (SSPP…QQQQ), 609-638 (NNNN…NNNN), 809-845 (NNNN…NNNN), and 1136-1159 (STAS…GQSN). Polar residues predominate over residues 1160-1177 (GLPMNSTTNQMNSHQINN). PC repeat units lie at residues 1440–1472 (AALM…PIND) and 1483–1520 (TAGM…ISKE). The segment at 1535–1586 (STPSISSNRNNNDLFNNGSNNNSSSNGGGGGGGGNNNGNNSNNGNNGSSQFK) is disordered. Low complexity predominate over residues 1540-1559 (SSNRNNNDLFNNGSNNNSSS). A compositionally biased stretch (gly residues) spans 1560-1570 (NGGGGGGGGNN). Low complexity predominate over residues 1571–1583 (NGNNSNNGNNGSS). 3 PC repeats span residues 1605-1637 (GAII…GLNY), 1722-1756 (GAAF…RQVY), and 1792-1807 (LVMA…KILR). The span at 1960–1993 (NNNNNNNNNNNNNNNNNNNNNNNNNNNNNNNNNN) shows a compositional bias: low complexity. Positions 1960–1997 (NNNNNNNNNNNNNNNNNNNNNNNNNNNNNNNNNNKNIL) are disordered.

It belongs to the APC1 family. The APC/C is composed of at least 13 subunits that stay tightly associated throughout the cell cycle: anapc1, anapc2, anapc3, anapc4, anapc5, anapc6, anapc7, anapc8, anapc10, anapc11, cdc20, cdc26 and cdh1.

Its subcellular location is the nucleus. The protein operates within protein modification; protein ubiquitination. In terms of biological role, component of the anaphase promoting complex/cyclosome (APC/C), a cell cycle-regulated E3 ubiquitin-protein ligase complex that controls progression through mitosis and the G1 phase of the cell cycle. This is Anaphase-promoting complex subunit 1 (anapc1) from Dictyostelium discoideum (Social amoeba).